Here is a 471-residue protein sequence, read N- to C-terminus: tRNA(Ile)-lysidine synthase (471 aa).

27 to 32 (SGGPDS) lines the ATP pocket.

This sequence belongs to the tRNA(Ile)-lysidine synthase family.

The protein localises to the cytoplasm. It carries out the reaction cytidine(34) in tRNA(Ile2) + L-lysine + ATP = lysidine(34) in tRNA(Ile2) + AMP + diphosphate + H(+). Its function is as follows. Ligates lysine onto the cytidine present at position 34 of the AUA codon-specific tRNA(Ile) that contains the anticodon CAU, in an ATP-dependent manner. Cytidine is converted to lysidine, thus changing the amino acid specificity of the tRNA from methionine to isoleucine. This Dehalococcoides mccartyi (strain CBDB1) protein is tRNA(Ile)-lysidine synthase.